The primary structure comprises 171 residues: uncharacterized protein (171 aa).

It belongs to the IUNH family.

This is an uncharacterized protein from Acidianus ambivalens (Desulfurolobus ambivalens).